A 291-amino-acid chain; its full sequence is Feruloyl esterase B (291 aa).

The N-terminal stretch at 1–18 (MLVRSFLGFAVLAATCLA) is a signal peptide. An N-linked (GlcNAc...) asparagine glycan is attached at N117. The active-site Charge relay system is the S136. N179 carries N-linked (GlcNAc...) asparagine glycosylation.

It belongs to the carbohydrate esterase 1 (CE1) family. Feruloyl esterase type B subfamily.

The protein localises to the secreted. It carries out the reaction feruloyl-polysaccharide + H2O = ferulate + polysaccharide.. In terms of biological role, feruloyl esterase which acts in synergy with xylanases in degradation of plant cell walls. Hydrolyzes the ester linkage of hydroxycinnamic acids (ferulic acid (FA) and p-coumaric acid) and diferulates present in plant cell walls. Is active on substrates containing ferulic acid ester linked to the C-5 and C-2 linkages of arabinofuranose, while it was found capable of de-esterifying acetylated glucuronoxylans. Efficiently releases ferulic acid (FA) from destarched wheat bran when incubated with an M3 xylanase. This Thermothelomyces thermophilus (strain ATCC 42464 / BCRC 31852 / DSM 1799) (Sporotrichum thermophile) protein is Feruloyl esterase B (Fae1a).